Reading from the N-terminus, the 66-residue chain is ATP synthase F(0) complex subunit 8 (66 aa).

The chain crosses the membrane as a helical span at residues 8–24 (IWLLAVVIVLTTLMIFL). Position 54 is an N6-acetyllysine; alternate (K54). K54 carries the post-translational modification N6-succinyllysine; alternate. An N6-acetyllysine modification is found at K57.

Belongs to the ATPase protein 8 family. As to quaternary structure, component of the ATP synthase complex composed at least of ATP5F1A/subunit alpha, ATP5F1B/subunit beta, ATP5MC1/subunit c (homooctomer), MT-ATP6/subunit a, MT-ATP8/subunit 8, ATP5ME/subunit e, ATP5MF/subunit f, ATP5MG/subunit g, ATP5MK/subunit k, ATP5MJ/subunit j, ATP5F1C/subunit gamma, ATP5F1D/subunit delta, ATP5F1E/subunit epsilon, ATP5PF/subunit F6, ATP5PB/subunit b, ATP5PD/subunit d, ATP5PO/subunit OSCP. ATP synthase complex consists of a soluble F(1) head domain (subunits alpha(3) and beta(3)) - the catalytic core - and a membrane F(0) domain - the membrane proton channel (subunits c, a, 8, e, f, g, k and j). These two domains are linked by a central stalk (subunits gamma, delta, and epsilon) rotating inside the F1 region and a stationary peripheral stalk (subunits F6, b, d, and OSCP). Interacts with PRICKLE3.

The protein resides in the mitochondrion membrane. Functionally, subunit 8, of the mitochondrial membrane ATP synthase complex (F(1)F(0) ATP synthase or Complex V) that produces ATP from ADP in the presence of a proton gradient across the membrane which is generated by electron transport complexes of the respiratory chain. ATP synthase complex consist of a soluble F(1) head domain - the catalytic core - and a membrane F(1) domain - the membrane proton channel. These two domains are linked by a central stalk rotating inside the F(1) region and a stationary peripheral stalk. During catalysis, ATP synthesis in the catalytic domain of F(1) is coupled via a rotary mechanism of the central stalk subunits to proton translocation. In vivo, can only synthesize ATP although its ATP hydrolase activity can be activated artificially in vitro. Part of the complex F(0) domain. This is ATP synthase F(0) complex subunit 8 from Loxodonta africana (African elephant).